Reading from the N-terminus, the 203-residue chain is MKNIEELILKAVELQSNGLVTGQIANELNVSRETVTWLLTRSKKDVVAPAPKDISVTWNSVGQSSYRLRCISQALCDMVIEKLERTQQDADLVIGIGLSGIPIATMMAEELEIDFAIFHDYDDQKGKTNQRGIFSRNFADVEGKKCIIVDDVVSSGATVTDVAEQLREVGATPIAVAVIVDKMNADMIANVPMSSLVRITRVD.

The protein belongs to the purine/pyrimidine phosphoribosyltransferase family. GfcR subfamily.

The sequence is that of Transcriptional regulator GfcR from Methanococcoides burtonii (strain DSM 6242 / NBRC 107633 / OCM 468 / ACE-M).